We begin with the raw amino-acid sequence, 479 residues long: UDP-N-acetylmuramate--L-alanine ligase (479 aa).

An ATP-binding site is contributed by 128-134 (GAHGKTT).

It belongs to the MurCDEF family.

It localises to the cytoplasm. The enzyme catalyses UDP-N-acetyl-alpha-D-muramate + L-alanine + ATP = UDP-N-acetyl-alpha-D-muramoyl-L-alanine + ADP + phosphate + H(+). It participates in cell wall biogenesis; peptidoglycan biosynthesis. In terms of biological role, cell wall formation. This Psychrobacter arcticus (strain DSM 17307 / VKM B-2377 / 273-4) protein is UDP-N-acetylmuramate--L-alanine ligase.